Consider the following 1417-residue polypeptide: DNA-directed RNA polymerase subunit beta' (1417 aa).

Residues Cys68, Cys70, Cys83, and Cys86 each contribute to the Zn(2+) site. Mg(2+)-binding residues include Asp458, Asp460, and Asp462. Residues Cys811, Cys884, Cys891, and Cys894 each coordinate Zn(2+).

It belongs to the RNA polymerase beta' chain family. As to quaternary structure, the RNAP catalytic core consists of 2 alpha, 1 beta, 1 beta' and 1 omega subunit. When a sigma factor is associated with the core the holoenzyme is formed, which can initiate transcription. Mg(2+) is required as a cofactor. The cofactor is Zn(2+).

It catalyses the reaction RNA(n) + a ribonucleoside 5'-triphosphate = RNA(n+1) + diphosphate. Its function is as follows. DNA-dependent RNA polymerase catalyzes the transcription of DNA into RNA using the four ribonucleoside triphosphates as substrates. In Francisella tularensis subsp. novicida (strain U112), this protein is DNA-directed RNA polymerase subunit beta'.